We begin with the raw amino-acid sequence, 72 residues long: NAD(P)H-quinone oxidoreductase subunit O (72 aa).

Belongs to the complex I NdhO subunit family. NDH-1 can be composed of about 15 different subunits; different subcomplexes with different compositions have been identified which probably have different functions.

It is found in the cellular thylakoid membrane. It catalyses the reaction a plastoquinone + NADH + (n+1) H(+)(in) = a plastoquinol + NAD(+) + n H(+)(out). The catalysed reaction is a plastoquinone + NADPH + (n+1) H(+)(in) = a plastoquinol + NADP(+) + n H(+)(out). In terms of biological role, NDH-1 shuttles electrons from an unknown electron donor, via FMN and iron-sulfur (Fe-S) centers, to quinones in the respiratory and/or the photosynthetic chain. The immediate electron acceptor for the enzyme in this species is believed to be plastoquinone. Couples the redox reaction to proton translocation, and thus conserves the redox energy in a proton gradient. Cyanobacterial NDH-1 also plays a role in inorganic carbon-concentration. The protein is NAD(P)H-quinone oxidoreductase subunit O of Trichodesmium erythraeum (strain IMS101).